A 228-amino-acid chain; its full sequence is MTQPLDDAASAIFGPRLELAQRYADWLATAGVERGLLGPREVDRLWERHVLNSAVIGELLDQGERVVDIGSGAGLPGLPLAIARPDLQVVLLEPMLRRVEFLQEVVTDLGLAVEVVRGRAEERSVRERLGGSDAAVSRAVAALDKLTKWSMPLLKREGRMLAIKGERAPDEVREHRRVMESLGAADVRVVPCGANYLQPPATVVVARRGDTRGPNRRVSPRRTGGAPA.

S-adenosyl-L-methionine contacts are provided by residues G70, L75, 120-121 (AE), and R138. The disordered stretch occupies residues 207-228 (RRGDTRGPNRRVSPRRTGGAPA).

It belongs to the methyltransferase superfamily. RNA methyltransferase RsmG family.

It is found in the cytoplasm. Its function is as follows. Specifically methylates the N7 position of guanine in position 518 of 16S rRNA. This is Ribosomal RNA small subunit methyltransferase G from Mycobacterium marinum (strain ATCC BAA-535 / M).